The following is a 1042-amino-acid chain: Sarcoplasmic/endoplasmic reticulum calcium ATPase 2 (1042 aa).

The Cytoplasmic portion of the chain corresponds to 1-48 (MENAHTKTVEEVLGHFGVNESTGLSLEQVKKLKERWGSNELPAEEGKT). A Phosphoserine modification is found at S38. Residues 49-69 (LLELVIEQFEDLLVRILLLAA) traverse the membrane as a helical segment. Residues 70 to 89 (CISFVLAWFEEGEETITAFV) lie on the Lumenal side of the membrane. The helical transmembrane segment at 90–110 (EPFVILLILVANAIVGVWQER) threads the bilayer. The Cytoplasmic segment spans residues 111-253 (NAENAIEALK…QERTPLQQKL (143 aa)). The chain crosses the membrane as a helical span at residues 254–273 (DEFGEQLSKVISLICIAVWI). The Lumenal portion of the chain corresponds to 274–295 (INIGHFNDPVHGGSWIRGAIYY). 3'-nitrotyrosine occurs at positions 294 and 295. A helical transmembrane segment spans residues 296-313 (FKIAVALAVAAIPEGLPA). The Ca(2+) site is built by V304, A305, I307, and E309. The Cytoplasmic portion of the chain corresponds to 314–756 (VITTCLALGT…EEGRAIYNNM (443 aa)). The active-site 4-aspartylphosphate intermediate is the D351. 2 residues coordinate Mg(2+): D351 and T353. T353 is a binding site for ATP. Phosphothreonine is present on T441. E442, R489, and K514 together coordinate ATP. At S531 the chain carries Phosphoserine. Position 559 (R559) interacts with ATP. The interaction with HAX1 stretch occupies residues 575–594 (MNLEDSANFIKYETNLTFVG). S580 carries the phosphoserine modification. ATP is bound by residues T624, G625, and D626. S663 carries the post-translational modification Phosphoserine. Positions 677 and 683 each coordinate ATP. Mg(2+) is bound at residue D702. N705 provides a ligand contact to ATP. A helical membrane pass occupies residues 757–776 (KQFIRYLISSNVGEVVCIFL). 2 residues coordinate Ca(2+): N767 and E770. Residues 777–786 (TAALGFPEAL) lie on the Lumenal side of the membrane. A helical membrane pass occupies residues 787-807 (IPVQLLWVNLVTDGLPATALG). The interval 787–807 (IPVQLLWVNLVTDGLPATALG) is interaction with PLN. Residues 788-1042 (PVQLLWVNLV…DTNFSDMFWS (255 aa)) form an interaction with TMEM64 and PDIA3 region. The Ca(2+) site is built by N795, T798, and D799. Topologically, residues 808–827 (FNPPDLDIMNKPPRNPKEPL) are cytoplasmic. A helical transmembrane segment spans residues 828-850 (ISGWLFFRYLAIGCYVGAATVGA). The Lumenal segment spans residues 851-896 (AAWWFIAADGGPRVTFYQLSHFLQCKEDNPDFEGVDCAVFESPYPM). Cysteines 875 and 887 form a disulfide. A helical membrane pass occupies residues 897–916 (TMALSVLVTIEMCNALNSLS). E907 provides a ligand contact to Ca(2+). Residues 917-929 (ENQSLLRMPPWEN) are Cytoplasmic-facing. The helical transmembrane segment at 930–948 (IWLVGSICLSMSLHFLILY) threads the bilayer. Residues 931 to 942 (WLVGSICLSMSL) are interaction with PLN. Topologically, residues 949–963 (VEPLPLIFQITPLNL) are lumenal. The chain crosses the membrane as a helical span at residues 964 to 984 (TQWLMVLKISLPVILMDETLK). Residues 985–1042 (FVARNYLEPGKECVQPATKSCSFSACTDGISWPFVLLIMPLVIWVYSTDTNFSDMFWS) lie on the Cytoplasmic side of the membrane.

It belongs to the cation transport ATPase (P-type) (TC 3.A.3) family. Type IIA subfamily. Interacts with sarcolipin (SLN); the interaction inhibits ATP2A2 Ca(2+) affinity. Interacts with phospholamban (PLN); the interaction inhibits ATP2A2 Ca(2+) affinity. Interacts with myoregulin (MRLN). Interacts with ARLN and ERLN; the interactions inhibit ATP2A2 Ca(2+) affinity. Interacts with STRIT1/DWORF; the interaction results in activation of ATP2A2. Interacts with the monomeric forms of SLN, PLN, ARLN, ERLN and STRI1/DWORF. Interacts with HAX1. Interacts with S100A8 and S100A9. Interacts with SLC35G1 and STIM1. Interacts with TMEM203. Interacts with TMEM64 and PDIA3. Interacts with TMX1. Interacts with TMX2. Interacts with VMP1; VMP1 competes with PLN and SLN to prevent them from forming an inhibitory complex with ATP2A2. Interacts with ULK1. Interacts with S100A1 in a Ca(2+)-dependent manner. Interacts with TUNAR. Interacts with FLVCR2; this interaction occurs in the absence of heme and promotes ATP2A2 proteasomal degradation; this complex is dissociated upon heme binding. Interacts with FNIP1. As to quaternary structure, interacts with TRAM2 (via C-terminus). Requires Mg(2+) as cofactor. In terms of processing, nitrated under oxidative stress. Nitration on the two tyrosine residues inhibits catalytic activity. Serotonylated on Gln residues by TGM2 in response to hypoxia, leading to its inactivation. In terms of tissue distribution, detected in heart left ventricle (at protein level). Isoform 2 is highly expressed in heart and slow twitch skeletal muscle. Isoform 1 is widely expressed.

The protein resides in the endoplasmic reticulum membrane. Its subcellular location is the sarcoplasmic reticulum membrane. It carries out the reaction Ca(2+)(in) + ATP + H2O = Ca(2+)(out) + ADP + phosphate + H(+). Its activity is regulated as follows. Has different conformational states with differential Ca2+ affinity. The E1 conformational state (active form) shows high Ca(2+) affinity, while the E2 state exhibits low Ca(2+) affinity. Binding of ATP allosterically increases its affinity for subsequent binding of Ca2+. Reversibly inhibited by phospholamban (PLN) at low calcium concentrations. PLN inhibits ATP2A2 Ca(2+) affinity by disrupting its allosteric activation by ATP. Inhibited by sarcolipin (SLN) and myoregulin (MRLN). The inhibition is blocked by VMP1. Enhanced by STRIT1/DWORF; STRIT1 increases activity by displacing sarcolipin (SLN), phospholamban (PLN) and myoregulin (MRLN). Stabilizes SERCA2 in its E2 state. This magnesium-dependent enzyme catalyzes the hydrolysis of ATP coupled with the translocation of calcium from the cytosol to the sarcoplasmic reticulum lumen. Involved in autophagy in response to starvation. Upon interaction with VMP1 and activation, controls ER-isolation membrane contacts for autophagosome formation. Also modulates ER contacts with lipid droplets, mitochondria and endosomes. In coordination with FLVCR2 mediates heme-stimulated switching from mitochondrial ATP synthesis to thermogenesis. Functionally, involved in the regulation of the contraction/relaxation cycle. Acts as a regulator of TNFSF11-mediated Ca(2+) signaling pathways via its interaction with TMEM64 which is critical for the TNFSF11-induced CREB1 activation and mitochondrial ROS generation necessary for proper osteoclast generation. Association between TMEM64 and SERCA2 in the ER leads to cytosolic Ca(2+) spiking for activation of NFATC1 and production of mitochondrial ROS, thereby triggering Ca(2+) signaling cascades that promote osteoclast differentiation and activation. In Sus scrofa (Pig), this protein is Sarcoplasmic/endoplasmic reticulum calcium ATPase 2 (ATP2A2).